A 94-amino-acid polypeptide reads, in one-letter code: RING finger protein Z (94 aa).

The tract at residues M1–S22 is disordered. G2 carries N-myristoyl glycine; by host lipidation. The RING-type; atypical zinc-finger motif lies at C39–C75. The short motif at P89–P92 is the PTAP/PSAP motif element.

Belongs to the arenaviridae Z protein family. As to quaternary structure, interacts with protein NP; this interaction probably directs the encapsidated genome to budding sites. Interacts (via RING domain) with polymerase L; this interaction inhibits viral transcription and replication, Z partially blocks the product exit tunnel for the releasing nascent RNA product. Interacts with the glycoprotein complex; this interaction plays a role in virion budding. Interacts with host eIF4E; this interaction results in eIF4E reduced affinity for its substrate, the 5'-m7 G cap structure. Interacts (via late-budding domain) with host TSG101; this interaction is essential for budding and release of viral particles. Interacts with host RPLP0; this interaction may serve to load ribosome-like particles inside the virion. Interacts with host PML; this interaction induces PML bodies redistribution in the cytoplasm upon viral infection. Myristoylation is required for the role of RING finger protein Z in assembly and budding.

The protein resides in the virion. Its subcellular location is the host cytoplasm. It localises to the host perinuclear region. It is found in the host cell membrane. Plays a crucial role in virion assembly and budding. Expressed late in the virus life cycle, it acts as an inhibitor of viral transcription and RNA synthesis by interacting with the viral polymerase L. Presumably recruits the NP encapsidated genome to cellular membranes at budding sites via direct interaction with NP. Plays critical roles in the final steps of viral release by interacting with host TSG101, a member of the vacuolar protein-sorting pathway and using other cellular host proteins involved in vesicle formation pathway. The budding of the virus progeny occurs after association of protein Z with the viral glycoprotein complex SSP-GP1-GP2 at the cell periphery, step that requires myristoylation of protein Z. Also selectively represses protein production by associating with host eIF4E. In cell-based minigenome assay, has an inhibitory effect on the ribonucleoprotein machinery (vRNP), which is responsible for the replication and transcription of the viral genome. The protein is RING finger protein Z of Calomys callosus (Large vesper mouse).